The sequence spans 332 residues: Glycerol-3-phosphate dehydrogenase [NAD(P)+] (332 aa).

Residues Ser11, Phe12, Lys32, and Lys106 each coordinate NADPH. The sn-glycerol 3-phosphate site is built by Lys106, Gly137, and Ser139. Ala141 contributes to the NADPH binding site. Sn-glycerol 3-phosphate-binding residues include Lys192, Asp245, Ser255, Arg256, and Asn257. The active-site Proton acceptor is Lys192. An NADPH-binding site is contributed by Arg256. NADPH-binding residues include Val280 and Glu282.

This sequence belongs to the NAD-dependent glycerol-3-phosphate dehydrogenase family.

The protein resides in the cytoplasm. The enzyme catalyses sn-glycerol 3-phosphate + NAD(+) = dihydroxyacetone phosphate + NADH + H(+). The catalysed reaction is sn-glycerol 3-phosphate + NADP(+) = dihydroxyacetone phosphate + NADPH + H(+). The protein operates within membrane lipid metabolism; glycerophospholipid metabolism. Functionally, catalyzes the reduction of the glycolytic intermediate dihydroxyacetone phosphate (DHAP) to sn-glycerol 3-phosphate (G3P), the key precursor for phospholipid synthesis. This is Glycerol-3-phosphate dehydrogenase [NAD(P)+] from Staphylococcus epidermidis (strain ATCC 35984 / DSM 28319 / BCRC 17069 / CCUG 31568 / BM 3577 / RP62A).